A 352-amino-acid polypeptide reads, in one-letter code: Putative hetero-Diels-Alderase (352 aa).

Positions 1-20 (MRYHLSALVLVFTAFRETLT) are cleaved as a signal peptide. 6 N-linked (GlcNAc...) asparagine glycosylation sites follow: Asn26, Asn41, Asn47, Asn135, Asn211, and Asn310.

This sequence belongs to the eupF Diels-Alderase family.

Its pathway is secondary metabolite biosynthesis; terpenoid biosynthesis. Functionally, putative hetero-Diels-Alderase; part of the gene cluster that mediates the biosynthesis of eupenifeldin, a bistropolone meroterpenoid that acts as an antitumor agent. The first step of eupenifeldin biosynthesis is the biosynthesis of 3-methylorcinaldehyde performed by the non-reducing polyketide synthase eupA. Oxidative dearomatization of 3-methylorcinaldehyde likely catalyzed by the FAD-dependent monooxygenase eupB is followed by oxidative ring expansion by the 2-oxoglutarate-dependent dioxygenase eupC to provide the first tropolone metabolite, tropolone stipitaldehyde. In parallel, generation of sesquiterpene alpha-humulene from farnesylpyrophosphate (FPP) is catalyzed by the terpene cyclase eupE. The cytochrome P450 monooxygenase eupD then hydroxylates humulene to humulenol. The putative Diels-Alderase eupF probably catalyzes the formation of the tropolone-humulene skeleton by linking humulenol and the polyketide moiety. The short-chain dehydrogenase/reductase eupG and the flavin-dependent monooxygenase eupH are also essential for eupenifeldin biosynthesis and are likely the additional decorating enzymes of the tropolone-humulene skeleton to produce final eupenifeldin or derivatives. This is Putative hetero-Diels-Alderase from Phoma sp.